Reading from the N-terminus, the 194-residue chain is Ferredoxin, apicoplast (194 aa).

Residues 1 to 19 (MNIVILLLILTFSIKHSNT) constitute an apicoplast transit peptide. The 2Fe-2S ferredoxin-type domain maps to 99 to 189 (YNITLRTNDG…DCVIETHKED (91 aa)). [2Fe-2S] cluster is bound by residues Cys-135, Cys-140, Cys-143, and Cys-173.

The protein belongs to the 2Fe2S plant-type ferredoxin family. It depends on [2Fe-2S] cluster as a cofactor.

The protein localises to the plastid. It localises to the apicoplast. Ferredoxins are iron-sulfur proteins that transfer electrons in a wide variety of metabolic reactions. By transferring electrons to 4-hydroxy-3-methylbut-2-enyl diphosphate reductase LytB/IspH, plays a role in the terminal step of the DOXP/MEP pathway for isoprenoid precursor biosynthesis. This chain is Ferredoxin, apicoplast, found in Plasmodium falciparum (isolate 3D7).